Reading from the N-terminus, the 830-residue chain is Histone acetyltransferase KAT2A (830 aa).

Residues 1–94 (MAEPSQAPNP…RKAQVRGLPR (94 aa)) form a disordered region. N-acetylalanine is present on Ala-2. Composition is skewed to pro residues over residues 7-33 (APNPVPAAQPRPLHSPAPAPTSTPAPS) and 41-51 (APTPAPAPAPA). The segment covering 58–69 (TGSGGAGVGSGG) has biased composition (gly residues). Basic residues predominate over residues 83-94 (SQRKAQVRGLPR). Ser-302 carries the post-translational modification Phosphoserine. Over residues 398 to 417 (SFSPSMGGGSNSSLSLDSAG) the composition is skewed to low complexity. Residues 398–426 (SFSPSMGGGSNSSLSLDSAGTEPMPAGEK) form a disordered region. The region spanning 496-649 (VIGNSLTPKA…GATLMECELN (154 aa)) is the N-acetyltransferase domain. Residue Lys-542 is modified to N6-acetyllysine. The Proton donor/acceptor role is filled by Glu-568. Acetyl-CoA contacts are provided by residues 572–574 (CAV), 579–585 (QVKGYGT), and Tyr-610. Residues 572 to 574 (CAV), 579 to 585 (QVKGYGT), and Tyr-610 contribute to the succinyl-CoA site. Lys-721 participates in a covalent cross-link: Glycyl lysine isopeptide (Lys-Gly) (interchain with G-Cter in SUMO2). Residues 721–825 (KDPDQLYTTL…KFFYFKLKEG (105 aa)) enclose the Bromo domain. Phosphothreonine is present on Thr-728. Residues Lys-752 and Lys-784 each participate in a glycyl lysine isopeptide (Lys-Gly) (interchain with G-Cter in SUMO2) cross-link.

This sequence belongs to the acetyltransferase family. GCN5 subfamily. As to quaternary structure, interacts with EP300, CREBBP and ADA2. Component of the TFTC-HAT complex, at least composed of TAF5L, TAF6L, TAF3, TADA3L, SUPT3H/SPT3, TAF2/TAFII150, TAF4/TAFII135, TAF5/TAFII100, KAT2A/GCN5L2, TAF10 and TRRAP. Component of the STAGA transcription coactivator-HAT complex, at least composed of SUPT3H, KAT2A, SUPT7L, TAF5L, TAF6L, TADA3L, TAD1L, TAF10, TAF12, TRRAP and TAF9. The STAGA core complex is associated with a subcomplex required for histone deubiquitination composed of ATXN7L3, ENY2 and USP22. Component of the ADA2A-containing complex (ATAC), composed of KAT14, KAT2A, TADA2L, TADA3L, ZZ3, MBIP, WDR5, YEATS2, CCDC101 and DR1. In the complex, it probably interacts directly with KAT14, MBIP and WDR5. Interacts with PML. Interacts with CEBPB. Interacts with TACC1, TACC2 and TACC3. Interacts with RELA. Interacts with NFATC2. Interacts with TBX5. Interacts with PLK4. Associates with the 2-oxoglutarate dehydrogenase complex. Interacts with XPC; leading to KAT2A recruitment to promoters and subsequent acetylation of histones. Interacts with ERCC3/XPB; leading to KAT2A recruitment to promoters and subsequent acetylation of histones. Interacts with ISL1. Interactions of ISL1 with MLIP1 or KAT2A may be mutually exclusive. In terms of processing, acetylated at Lys-542, inhibiting the protein acetyltransferase activity. Deacetylation at Lys-542 by SIRT6 promotes phosphorylation at Ser-302 and Thr-728 and subsequent activation of the protein acetyltransferase activity, leading to acetylation and inactivation of PPARGC1A. As to expression, in brain, highly expressed in the hippocampal CA1 region (at protein level). Also expressed in the hippocampal subregions CA3 and the dentate gyrus as well as in the cortex and prefrontal cortex. Expressed at low level in the cerebellum.

It localises to the nucleus. It is found in the chromosome. Its subcellular location is the cytoplasm. The protein localises to the cytoskeleton. The protein resides in the microtubule organizing center. It localises to the centrosome. It catalyses the reaction L-lysyl-[histone] + acetyl-CoA = N(6)-acetyl-L-lysyl-[histone] + CoA + H(+). The enzyme catalyses L-lysyl-[protein] + acetyl-CoA = N(6)-acetyl-L-lysyl-[protein] + CoA + H(+). The catalysed reaction is succinyl-CoA + L-lysyl-[protein] = N(6)-succinyl-L-lysyl-[protein] + CoA + H(+). It carries out the reaction glutaryl-CoA + L-lysyl-[protein] = N(6)-glutaryl-L-lysyl-[protein] + CoA + H(+). Protein lysine acyltransferase that can act as a acetyltransferase, glutaryltransferase, succinyltransferase or malonyltransferase, depending on the context. Acts as a histone lysine succinyltransferase: catalyzes succinylation of histone H3 on 'Lys-79' (H3K79succ), with a maximum frequency around the transcription start sites of genes. Succinylation of histones gives a specific tag for epigenetic transcription activation. Association with the 2-oxoglutarate dehydrogenase complex, which provides succinyl-CoA, is required for histone succinylation. In different complexes, functions either as an acetyltransferase (HAT) or as a succinyltransferase: in the SAGA and ATAC complexes, acts as a histone acetyltransferase. Has significant histone acetyltransferase activity with core histones, but not with nucleosome core particles. Has a a strong preference for acetylation of H3 at 'Lys-9' (H3K9ac). Acetylation of histones gives a specific tag for epigenetic transcription activation. Recruited by the XPC complex at promoters, where it specifically mediates acetylation of histone variant H2A.Z.1/H2A.Z, thereby promoting expression of target genes. Involved in long-term memory consolidation and synaptic plasticity: acts by promoting expression of a hippocampal gene expression network linked to neuroactive receptor signaling. Acts as a positive regulator of T-cell activation: upon TCR stimulation, recruited to the IL2 promoter following interaction with NFATC2 and catalyzes acetylation of histone H3 at 'Lys-9' (H3K9ac), leading to promote IL2 expression. Required for growth and differentiation of craniofacial cartilage and bone by regulating acetylation of histone H3 at 'Lys-9' (H3K9ac). Regulates embryonic stem cell (ESC) pluripotency and differentiation. Also acetylates non-histone proteins, such as CEBPB, MRE11, PPARGC1A, PLK4 and TBX5. Involved in heart and limb development by mediating acetylation of TBX5, acetylation regulating nucleocytoplasmic shuttling of TBX5. Acts as a negative regulator of centrosome amplification by mediating acetylation of PLK4. Acts as a negative regulator of gluconeogenesis by mediating acetylation and subsequent inactivation of PPARGC1A. Also acts as a histone glutaryltransferase: catalyzes glutarylation of histone H4 on 'Lys-91' (H4K91glu), a mark that destabilizes nucleosomes by promoting dissociation of the H2A-H2B dimers from nucleosomes. The polypeptide is Histone acetyltransferase KAT2A (Mus musculus (Mouse)).